A 163-amino-acid chain; its full sequence is Probable cyclic pyranopterin monophosphate synthase (163 aa).

A disordered region spans residues 1 to 23 (MPDGDDDALTHTTADGDAQMVDV). Substrate-binding positions include 80–82 (MCH) and 116–117 (ME). The active site involves Asp-131.

The protein belongs to the MoaC family. In terms of assembly, homohexamer; trimer of dimers.

The catalysed reaction is (8S)-3',8-cyclo-7,8-dihydroguanosine 5'-triphosphate = cyclic pyranopterin phosphate + diphosphate. It participates in cofactor biosynthesis; molybdopterin biosynthesis. In terms of biological role, catalyzes the conversion of (8S)-3',8-cyclo-7,8-dihydroguanosine 5'-triphosphate to cyclic pyranopterin monophosphate (cPMP). This is Probable cyclic pyranopterin monophosphate synthase from Halobacterium salinarum (strain ATCC 29341 / DSM 671 / R1).